An 87-amino-acid polypeptide reads, in one-letter code: MKPGIHPDYREVVFQDMSNGFKFITRSTIQTRETIELEGKTYPLAKIEVSSESHSFYTGQQKIMDTAGRVEKFKNKFGSRASGKVAK.

It belongs to the bacterial ribosomal protein bL31 family. Type B subfamily. Part of the 50S ribosomal subunit.

The protein is Large ribosomal subunit protein bL31B of Burkholderia multivorans (strain ATCC 17616 / 249).